Here is a 297-residue protein sequence, read N- to C-terminus: PAK4-inhibitor INKA2 (297 aa).

Disordered stretches follow at residues 82 to 109 (GRGPARPTVCSPSSQPSLGSSTKFPSHR), 175 to 200 (LEKGGEKGETGGAREPKGEKGQPQEL), and 234 to 285 (TPMV…LEHS). Positions 92–102 (SPSSQPSLGSS) are enriched in low complexity. Positions 137–180 (EPDDWTSTLMSRGRNRQPLVLGDNVFADLVGNWLDLPELEKGGE) are inka box. The segment covering 244–253 (RSQKVKKRSL) has biased composition (basic residues).

This sequence belongs to the INKA family. As to quaternary structure, interacts with PAK4.

Its subcellular location is the nucleus. In terms of biological role, inhibitor of the serine/threonine-protein kinase PAK4. Acts by binding PAK4 in a substrate-like manner, inhibiting the protein kinase activity. This is PAK4-inhibitor INKA2 from Homo sapiens (Human).